A 439-amino-acid chain; its full sequence is C4-dicarboxylate transport protein (439 aa).

A run of 9 helical transmembrane segments spans residues histidine 9 to proline 29, methionine 45 to methionine 65, leucine 80 to isoleucine 100, glycine 150 to glycine 170, alanine 186 to methionine 206, leucine 221 to glycine 241, valine 291 to leucine 311, isoleucine 334 to valine 354, and alanine 357 to isoleucine 377.

It belongs to the dicarboxylate/amino acid:cation symporter (DAACS) (TC 2.A.23) family.

The protein localises to the cell inner membrane. In terms of biological role, responsible for the transport of dicarboxylates such as succinate, fumarate, and malate from the periplasm across the membrane. This Citrifermentans bemidjiense (strain ATCC BAA-1014 / DSM 16622 / JCM 12645 / Bem) (Geobacter bemidjiensis) protein is C4-dicarboxylate transport protein.